The sequence spans 61 residues: Short neurotoxin 2 (61 aa).

4 disulfide bridges follow: C3/C23, C17/C40, C42/C53, and C54/C59.

Belongs to the three-finger toxin family. Short-chain subfamily. Type I alpha-neurotoxin sub-subfamily. Expressed by the venom gland.

Its subcellular location is the secreted. Its function is as follows. Binds to muscle nicotinic acetylcholine receptor (nAChR) and inhibit acetylcholine from binding to the receptor, thereby impairing neuromuscular transmission. This Naja annulifera (Banded Egyptian cobra) protein is Short neurotoxin 2.